Here is a 179-residue protein sequence, read N- to C-terminus: UPF0316 protein Ping_1367 (179 aa).

A run of 2 helical transmembrane segments spans residues 28–48 (FLAS…SAQV) and 55–75 (WYLA…GISI).

It belongs to the UPF0316 family.

It is found in the cell membrane. The chain is UPF0316 protein Ping_1367 from Psychromonas ingrahamii (strain DSM 17664 / CCUG 51855 / 37).